A 361-amino-acid polypeptide reads, in one-letter code: Anthranilate phosphoribosyltransferase (361 aa).

5-phospho-alpha-D-ribose 1-diphosphate is bound by residues glycine 101, 104–105, threonine 109, 111–114, 129–137, and serine 141; these read GD, NIST, and KHGNRGVSS. An anthranilate-binding site is contributed by glycine 101. Residue serine 113 coordinates Mg(2+). Residue asparagine 132 participates in anthranilate binding. Arginine 187 serves as a coordination point for anthranilate. 2 residues coordinate Mg(2+): aspartate 245 and glutamate 246.

The protein belongs to the anthranilate phosphoribosyltransferase family. In terms of assembly, homodimer. Mg(2+) serves as cofactor.

The enzyme catalyses N-(5-phospho-beta-D-ribosyl)anthranilate + diphosphate = 5-phospho-alpha-D-ribose 1-diphosphate + anthranilate. Its pathway is amino-acid biosynthesis; L-tryptophan biosynthesis; L-tryptophan from chorismate: step 2/5. Functionally, catalyzes the transfer of the phosphoribosyl group of 5-phosphorylribose-1-pyrophosphate (PRPP) to anthranilate to yield N-(5'-phosphoribosyl)-anthranilate (PRA). This is Anthranilate phosphoribosyltransferase from Shewanella denitrificans (strain OS217 / ATCC BAA-1090 / DSM 15013).